Reading from the N-terminus, the 504-residue chain is Maturase K (504 aa).

Belongs to the intron maturase 2 family. MatK subfamily.

It localises to the plastid. The protein resides in the chloroplast. Usually encoded in the trnK tRNA gene intron. Probably assists in splicing its own and other chloroplast group II introns. This is Maturase K from Lablab purpureus (Hyacinth bean).